Reading from the N-terminus, the 321-residue chain is Glucokinase (321 aa).

8–13 lines the ATP pocket; the sequence is GDVGGT.

The protein belongs to the bacterial glucokinase family.

The protein resides in the cytoplasm. It catalyses the reaction D-glucose + ATP = D-glucose 6-phosphate + ADP + H(+). This is Glucokinase from Citrobacter koseri (strain ATCC BAA-895 / CDC 4225-83 / SGSC4696).